Here is a 796-residue protein sequence, read N- to C-terminus: Choline transporter-like 2 (796 aa).

N20 is a glycosylation site (N-linked (GlcNAc...) asparagine). The helical transmembrane segment at 35–55 (PCLLLFVLFLGGWAFIAQYAI) threads the bilayer. N-linked (GlcNAc...) asparagine glycosylation is found at N209 and N284. 4 helical membrane-spanning segments follow: residues 304–324 (WSIV…YIAL), 332–352 (ILWF…YFSV), 386–406 (LYLS…VIVL), and 431–451 (VFFP…AIGV). N-linked (GlcNAc...) asparagine glycans are attached at residues N488 and N520. 5 helical membrane-spanning segments follow: residues 542–562 (VFGF…VLAS), 585–605 (FFQT…ILAI), 626–648 (AVTR…FLKF), 691–711 (FLFF…TYYF), and 724–744 (IAVP…VFFG).

Belongs to the CTL (choline transporter-like) family.

The protein localises to the membrane. The polypeptide is Choline transporter-like 2 (Drosophila melanogaster (Fruit fly)).